The primary structure comprises 756 residues: Catalase-peroxidase (756 aa).

Residues 91-244 constitute a cross-link (tryptophyl-tyrosyl-methioninium (Trp-Tyr) (with M-270)); it reads WHSAGTYRTG…LAAVQMGLIY (154 aa). His92 functions as the Proton acceptor in the catalytic mechanism. Residues 198–230 form a disordered region; the sequence is AQKKMQQPGDGTLVAEPENHANEESRTASGERN. Residues 214-223 are compositionally biased toward basic and acidic residues; that stretch reads PENHANEESR. The tryptophyl-tyrosyl-methioninium (Tyr-Met) (with W-91) cross-link spans 244–270; it reads YVNPEGPEGVPDPVASAKDIRETFGRM. His285 lines the heme b pocket. The interval 371 to 390 is disordered; sequence KNGAGAGKIPDAHDPSKRHA.

The protein belongs to the peroxidase family. Peroxidase/catalase subfamily. As to quaternary structure, homodimer or homotetramer. Requires heme b as cofactor. Formation of the three residue Trp-Tyr-Met cross-link is important for the catalase, but not the peroxidase activity of the enzyme.

The enzyme catalyses H2O2 + AH2 = A + 2 H2O. It catalyses the reaction 2 H2O2 = O2 + 2 H2O. Bifunctional enzyme with both catalase and broad-spectrum peroxidase activity. This Pseudomonas savastanoi pv. phaseolicola (strain 1448A / Race 6) (Pseudomonas syringae pv. phaseolicola (strain 1448A / Race 6)) protein is Catalase-peroxidase.